The chain runs to 296 residues: Probable lipid kinase YegS-like (296 aa).

The DAGKc domain occupies 1–130 (MPHTLLILNG…IDLAQVNDKH (130 aa)). ATP is bound by residues Thr-37, 63–69 (GDGTINE), and Thr-92. Mg(2+) is bound by residues Leu-212, Asp-215, and Leu-217. Residue Glu-268 is the Proton acceptor of the active site.

Belongs to the diacylglycerol/lipid kinase family. YegS lipid kinase subfamily. The cofactor is Mg(2+). It depends on Ca(2+) as a cofactor.

The protein localises to the cytoplasm. Probably phosphorylates lipids; the in vivo substrate is unknown. In Yersinia enterocolitica serotype O:8 / biotype 1B (strain NCTC 13174 / 8081), this protein is Probable lipid kinase YegS-like.